The chain runs to 404 residues: Spore development regulator RYP2 (404 aa).

Disordered regions lie at residues 1–46 (MSAP…RKAV), 200–231 (LLKRPLNRAEPDYPAPPTQPRTPERSGASSQQ), and 382–404 (SGQSFSQSAGHMQSPSQVPPAWG). A Velvet domain is found at 17–194 (LQSADFRLTV…ADQGVKLRIR (178 aa)). Positions 29 to 46 (NPERARVAGGKEKERKAV) are enriched in basic and acidic residues. The segment covering 382 to 397 (SGQSFSQSAGHMQSPS) has biased composition (polar residues).

This sequence belongs to the velvet family. VosA subfamily. Forms a heterodimeric complex with RYP3; the formation of the RYP2-RYP3 complex is light-dependent.

Its subcellular location is the nucleus. Component of the RYP2-RYP3 heterodimeric complex that plays a dual role in activating genes associated with spore maturation and repressing certain development-associated genes. The complex binds DNA through the DNA-binding domain of vosA that recognizes an 11-nucleotide consensus sequence 5'-CTGGCCGCGGC-3' consisting of two motifs in the promoters of key developmental regulatory genes. Required for viable spore production and regulation of sporulation in response to temperature and for the switch to yeast-form in the presence of host cells. This Ajellomyces capsulatus (Darling's disease fungus) protein is Spore development regulator RYP2.